Consider the following 140-residue polypeptide: Nucleoside diphosphate kinase (140 aa).

Residues Lys9, Phe57, Arg85, Thr91, Arg102, and Asn112 each contribute to the ATP site. His115 acts as the Pros-phosphohistidine intermediate in catalysis.

It belongs to the NDK family. Homotetramer. The cofactor is Mg(2+).

The protein resides in the cytoplasm. It carries out the reaction a 2'-deoxyribonucleoside 5'-diphosphate + ATP = a 2'-deoxyribonucleoside 5'-triphosphate + ADP. It catalyses the reaction a ribonucleoside 5'-diphosphate + ATP = a ribonucleoside 5'-triphosphate + ADP. Its function is as follows. Major role in the synthesis of nucleoside triphosphates other than ATP. The ATP gamma phosphate is transferred to the NDP beta phosphate via a ping-pong mechanism, using a phosphorylated active-site intermediate. This Chlorobium luteolum (strain DSM 273 / BCRC 81028 / 2530) (Pelodictyon luteolum) protein is Nucleoside diphosphate kinase.